We begin with the raw amino-acid sequence, 190 residues long: Elongation factor P-like protein (190 aa).

It belongs to the elongation factor P family.

This Klebsiella pneumoniae subsp. pneumoniae (strain ATCC 700721 / MGH 78578) protein is Elongation factor P-like protein.